The primary structure comprises 587 residues: 2-succinyl-5-enolpyruvyl-6-hydroxy-3-cyclohexene-1-carboxylate synthase (587 aa).

This sequence belongs to the TPP enzyme family. MenD subfamily. Homodimer. Mg(2+) is required as a cofactor. It depends on Mn(2+) as a cofactor. Requires thiamine diphosphate as cofactor.

The catalysed reaction is isochorismate + 2-oxoglutarate + H(+) = 5-enolpyruvoyl-6-hydroxy-2-succinyl-cyclohex-3-ene-1-carboxylate + CO2. It participates in quinol/quinone metabolism; 1,4-dihydroxy-2-naphthoate biosynthesis; 1,4-dihydroxy-2-naphthoate from chorismate: step 2/7. Its pathway is cofactor biosynthesis; phylloquinone biosynthesis. Its function is as follows. Catalyzes the thiamine diphosphate-dependent decarboxylation of 2-oxoglutarate and the subsequent addition of the resulting succinic semialdehyde-thiamine pyrophosphate anion to isochorismate to yield 2-succinyl-5-enolpyruvyl-6-hydroxy-3-cyclohexene-1-carboxylate (SEPHCHC). The polypeptide is 2-succinyl-5-enolpyruvyl-6-hydroxy-3-cyclohexene-1-carboxylate synthase (Prochlorococcus marinus (strain AS9601)).